A 799-amino-acid polypeptide reads, in one-letter code: Protein ADP-ribosyltransferase PARP3 (799 aa).

The span at M1 to G49 shows a compositional bias: basic and acidic residues. Residues M1–S55 are disordered. Positions K39–P188 constitute a PADR1 zinc-binding domain. The SAP domain maps to N71–L105. Positions G108–P152 are zinc ribbon. Positions 113, 116, 129, and 139 each coordinate Zn(2+). Residues T140 to N161 are disordered. Positions E145–K154 are enriched in basic and acidic residues. The region spanning F189 to L261 is the BRCT domain. A WGR domain is found at D309–F409. The 120-residue stretch at H436–G555 folds into the PARP alpha-helical domain. The PARP catalytic domain occupies D564 to I795.

The protein belongs to the ARTD/PARP family.

It localises to the nucleus. The catalysed reaction is L-aspartyl-[protein] + NAD(+) = 4-O-(ADP-D-ribosyl)-L-aspartyl-[protein] + nicotinamide. It carries out the reaction L-glutamyl-[protein] + NAD(+) = 5-O-(ADP-D-ribosyl)-L-glutamyl-[protein] + nicotinamide. In terms of biological role, involved in the base excision repair (BER) pathway, by catalyzing the poly(ADP-ribosyl)ation of a limited number of acceptor proteins involved in chromatin architecture and in DNA metabolism. This modification follows DNA damages and appears as an obligatory step in a detection/signaling pathway leading to the reparation of DNA strand breaks. The polypeptide is Protein ADP-ribosyltransferase PARP3 (PARP3) (Medicago truncatula (Barrel medic)).